The following is a 363-amino-acid chain: Dioxygenase sphC (363 aa).

The Fe cation site is built by histidine 183, aspartate 185, and histidine 259.

This sequence belongs to the PhyH family. As to quaternary structure, homodimer. The cofactor is Fe cation.

The enzyme catalyses sphingofungin B1 + 2-oxoglutarate + O2 = sphingofungin B + succinate + CO2. It participates in secondary metabolite biosynthesis. Dioxygenase; part of the gene cluster that mediates the biosynthesis of sphingofungins, bioactive molecules acting as sphingolipid inhibitors via inhibiting serine palmitoyl transferase (SPT). Within the pathway, sphC catalyzes the hydrolxylation at C-4 to convert sphingofungin B1 into sphingofungin B as well as presphingofungin into sphingofungin B2. Sphingofungin biosynthesis starts with the PKS sphB that produces an C18 polyketide precursor 3-hydroxyoctadeca-4,10-dienoyl-ACP containing one delta-6 desaturation and one delta-12 desaturation. The aminoacyl transferase sphA uses the sphB product to produce 3-keto-presphingofungin by adding an aminomalonate molecule. SphF then reduces the C-3 ketone of 3-keto-presphingofungin which leads to presphingofungin. The cytochrome P450 monooxygenase sphH converts presphingofungin into sphingofungin B1 which is further converted to sphingofungin B by the dioxygenase sphC. SphC is also able to convert presphingofungin into sphingofungin B2. The acetyltransferase sphE acetylates sphingofungin B to produce sphingofungin C, but can also convert sphingofungin B1 into sphingofungin C1 and sphingofungin B2 into sphingofungin C2. Finally, sphingofungin C can be spontaneously converted into sphingofungin D. This chain is Dioxygenase sphC, found in Aspergillus fumigatus (strain CBS 144.89 / FGSC A1163 / CEA10) (Neosartorya fumigata).